Here is a 148-residue protein sequence, read N- to C-terminus: Large ribosomal subunit protein bL9 (148 aa).

This sequence belongs to the bacterial ribosomal protein bL9 family.

Functionally, binds to the 23S rRNA. This is Large ribosomal subunit protein bL9 from Pelotomaculum thermopropionicum (strain DSM 13744 / JCM 10971 / SI).